Consider the following 79-residue polypeptide: M-myrmicitoxin(01)-Tb1a (79 aa).

The signal sequence occupies residues 1–26; the sequence is MKLSFLSLVLAIILVMALMYTPHAEA. A propeptide spanning residues 27–56 is cleaved from the precursor; it reads KAWADADADATAAADADADAVADALADAVA. V76 carries the valine amide modification.

The protein belongs to the formicidae venom precursor-01 superfamily. The C-terminal amidation is important for antimicrobial activity, since a non-amidated synthetic peptide shows a reduced antimicrobial activity (2-20-fold depending on the strain tested). The amidation may play a positive role in the peptide conformation, since amidated peptide shows an increase of about 5% of helical content. Expressed by the venom gland.

The protein resides in the secreted. Its subcellular location is the target cell membrane. Its function is as follows. Antimicrobial peptide that shows antimicrobial activities against all microorganisms tested with minimal inhibitory concentrations (MICs) values ranging from 0.45 to 97.5 umol/L. This peptide kills the microorganisms by permeabilizating the membranes. It shows a very weak hemolytic activity (HC(50)=325 umol/L) and weak cytotoxicity against human lymphocytes (LC(50)=67.8 umol/L). Gram-negative bacteria tested are E.coli (MIC=24.4 umol/L), C.sakazakii (MIC=5.8 umol/L), P.aeruginosa (MIC=8.7-12.2 umol/L), S.enterica (MIC=5.4 umol/L), and H.pylori (MIC=0.99-3.9 umol/L). Gram-positive bacteria tested are E.hirae (MIC=12.2 umol/L), S.aureus (MIC=3.0-6.4 umol/L), methicillin-resistant S.aureus (MRSA) (MIC=8.7 umol/L), S.xylosus (MIC=0.45-1.3 umol/L), and B.subtilis (MIC=24.4 umol/L). Fungi tested are A.niger (MIC=0.75 umol/L), C.albicans (MIC=17.3 umol/L), G.candidum (MIC=97.5 umol/L), and S.cerevisiae (MIC=6.1 umol/L). Finally the parasite tested is L.infantum (MIC=1.5 umol/L). In Tetramorium bicarinatum (Tramp ant), this protein is M-myrmicitoxin(01)-Tb1a.